The primary structure comprises 84 residues: U-actitoxin-Avd8e (84 aa).

The N-terminal stretch at 1–22 (MASARTLVLLLIGAVLMCQVSA) is a signal peptide. Positions 23–41 (DSELLNEILAAHMEEDMPE) are excised as a propeptide. Positions 44-84 (CIDRYRSNICGSVIRPLDCTRRKSRMGRFARTNCKKLCGFC) constitute a ShKT domain. 3 disulfide bridges follow: Cys-44-Cys-84, Cys-53-Cys-77, and Cys-62-Cys-81.

It belongs to the sea anemone 8 toxin family.

It is found in the secreted. It localises to the nematocyst. This Anemonia viridis (Snakelocks anemone) protein is U-actitoxin-Avd8e.